Reading from the N-terminus, the 323-residue chain is uncharacterized protein (323 aa).

The chain crosses the membrane as a helical span at residues 4-24; the sequence is IIFAFIILFVFLLPMIIFYQP.

The protein localises to the membrane. This is an uncharacterized protein from Escherichia coli (strain K12).